The following is a 223-amino-acid chain: UPF0502 protein Sbal223_2520 (223 aa).

Belongs to the UPF0502 family.

This Shewanella baltica (strain OS223) protein is UPF0502 protein Sbal223_2520.